A 256-amino-acid chain; its full sequence is Zinc metalloprotease (256 aa).

His74 (proton donor) is an active-site residue.

It belongs to the peptidase M4 family. It depends on Zn(2+) as a cofactor.

It localises to the secreted. May play a role in ulcer formation. Proteolytic digestion of gastric mucus has been suggested as an important mechanism by which its pathogenicity is at least partly exerted. This is Zinc metalloprotease (hap) from Helicobacter pylori (Campylobacter pylori).